A 177-amino-acid polypeptide reads, in one-letter code: NADH-quinone oxidoreductase subunit B (177 aa).

Residues Cys-36, Cys-37, Cys-101, and Cys-130 each coordinate [4Fe-4S] cluster.

The protein belongs to the complex I 20 kDa subunit family. In terms of assembly, NDH-1 is composed of 14 different subunits. Subunits NuoB, C, D, E, F, and G constitute the peripheral sector of the complex. [4Fe-4S] cluster is required as a cofactor.

The protein resides in the cell inner membrane. It carries out the reaction a quinone + NADH + 5 H(+)(in) = a quinol + NAD(+) + 4 H(+)(out). Its function is as follows. NDH-1 shuttles electrons from NADH, via FMN and iron-sulfur (Fe-S) centers, to quinones in the respiratory chain. The immediate electron acceptor for the enzyme in this species is believed to be ubiquinone. Couples the redox reaction to proton translocation (for every two electrons transferred, four hydrogen ions are translocated across the cytoplasmic membrane), and thus conserves the redox energy in a proton gradient. In Hydrogenobaculum sp. (strain Y04AAS1), this protein is NADH-quinone oxidoreductase subunit B.